The chain runs to 373 residues: DNA replication and repair protein RecF (373 aa).

Residue 30–37 (GENAQGKT) coordinates ATP.

Belongs to the RecF family.

The protein localises to the cytoplasm. The RecF protein is involved in DNA metabolism; it is required for DNA replication and normal SOS inducibility. RecF binds preferentially to single-stranded, linear DNA. It also seems to bind ATP. The chain is DNA replication and repair protein RecF from Limosilactobacillus fermentum (strain NBRC 3956 / LMG 18251) (Lactobacillus fermentum).